The chain runs to 197 residues: UDP-N-acetylglucosamine transferase subunit ALG13 (197 aa).

It belongs to the glycosyltransferase 28 family. In terms of assembly, heterodimer with ALG14 to form a functional enzyme.

The protein localises to the endoplasmic reticulum. The catalysed reaction is an N-acetyl-alpha-D-glucosaminyl-diphospho-di-trans,poly-cis-dolichol + UDP-N-acetyl-alpha-D-glucosamine = an N,N'-diacetylchitobiosyl-diphospho-di-trans,poly-cis-dolichol + UDP + H(+). Involved in protein N-glycosylation. Essential for the second step of the dolichol-linked oligosaccharide pathway. The chain is UDP-N-acetylglucosamine transferase subunit ALG13 (ALG13) from Kluyveromyces lactis (strain ATCC 8585 / CBS 2359 / DSM 70799 / NBRC 1267 / NRRL Y-1140 / WM37) (Yeast).